Reading from the N-terminus, the 968-residue chain is RNA polymerase-associated protein RapA (968 aa).

Residues 163-332 (EVGRRYAPRV…FARLRLLDPD (170 aa)) form the Helicase ATP-binding domain. 176-183 (DEVGLGKT) is an ATP binding site. The short motif at 278 to 281 (DEAH) is the DEAH box element. The region spanning 491–641 (RVDWLIAFLK…AFELTCPSGH (151 aa)) is the Helicase C-terminal domain.

The protein belongs to the SNF2/RAD54 helicase family. RapA subfamily. Interacts with the RNAP. Has a higher affinity for the core RNAP than for the holoenzyme. Its ATPase activity is stimulated by binding to RNAP.

Transcription regulator that activates transcription by stimulating RNA polymerase (RNAP) recycling in case of stress conditions such as supercoiled DNA or high salt concentrations. Probably acts by releasing the RNAP, when it is trapped or immobilized on tightly supercoiled DNA. Does not activate transcription on linear DNA. Probably not involved in DNA repair. The sequence is that of RNA polymerase-associated protein RapA from Shewanella denitrificans (strain OS217 / ATCC BAA-1090 / DSM 15013).